A 167-amino-acid chain; its full sequence is Peptide deformylase (167 aa).

Positions 91 and 133 each coordinate Fe cation. E134 is an active-site residue. Residue H137 coordinates Fe cation.

The protein belongs to the polypeptide deformylase family. The cofactor is Fe(2+).

It catalyses the reaction N-terminal N-formyl-L-methionyl-[peptide] + H2O = N-terminal L-methionyl-[peptide] + formate. Removes the formyl group from the N-terminal Met of newly synthesized proteins. Requires at least a dipeptide for an efficient rate of reaction. N-terminal L-methionine is a prerequisite for activity but the enzyme has broad specificity at other positions. The polypeptide is Peptide deformylase (Tolumonas auensis (strain DSM 9187 / NBRC 110442 / TA 4)).